The primary structure comprises 459 residues: MANITNEFMGHDMLAPFTAGWQSDMEPLVIEKSKGSYVYDINGKKYLDTLSGLWCATLGGSETRLVEAANKQLNTLPFYHSFWNRTTKPSLDLAKELLNMFTANKMAKVFFTNSGSEANDTQVKLVWYYNNALGRPQKKKIIARAKAYHGSTYISAGLSGLPPMHQKFDLPPPFVLHTECPHYWAYHLPGETEEEFSTRLANNLESLILNEGPETVAAFIAEPVLGAAGVILPPATYFDKVQAILRKHDILFIADEVVCGFGRLGTMFGSDKYNIKPDLVSVAKALSSGYMPIAAVLVSQKISSVILSESNKIGAFCHGFTYSGHPVACAVALEALKIYKERNITEVVNKISQKFQEGLKAFADSPIIGEIRGTGLALSTEFVDNKSPNDPFPYEWAVGTYFGAQCAKYGMLVSSTGDHVNMAPPFTLSLEELDELIRIYGKALKDTEKRVEELKSQKK.

Residues 115–116 (GS) and Asp-255 contribute to the pyridoxal 5'-phosphate site. Residue Lys-284 is modified to N6-(pyridoxal phosphate)lysine. 320–321 (FT) contacts pyridoxal 5'-phosphate. A coiled-coil region spans residues 428 to 459 (LSLEELDELIRIYGKALKDTEKRVEELKSQKK).

It belongs to the class-III pyridoxal-phosphate-dependent aminotransferase family. As to expression, expressed in placental tissue of immature fruit.

The catalysed reaction is vanillin + L-alanine = vanillylamine + pyruvate. Involved in the biosynthesis of capsaicinoids natural products, pungent alkaloids synthesized from phenylpropanoid intermediates in the placental tissue of chili pepper fruit acting as repellant on herbivorous mammals and conferring spiciness to hot peppers. Can transfer an amine from alanine to vanillin, forming vanillylamine and pyruvate. This Capsicum frutescens (Cayenne pepper) protein is Vanillin aminotransferase.